Consider the following 169-residue polypeptide: Cell division protein B3 (169 aa).

In terms of biological role, part of a cell division machinery. May fulfill a coordination function between the Cdv proteins during cell division. The sequence is that of Cell division protein B3 from Sulfolobus acidocaldarius (strain ATCC 33909 / DSM 639 / JCM 8929 / NBRC 15157 / NCIMB 11770).